Consider the following 511-residue polypeptide: 2,3-bisphosphoglycerate-independent phosphoglycerate mutase (511 aa).

2 residues coordinate Mn(2+): Asp-14 and Ser-64. Ser-64 functions as the Phosphoserine intermediate in the catalytic mechanism. Residues His-125, Arg-155–Asp-156, Arg-187, Arg-193, Arg-259–Arg-262, and Lys-333 contribute to the substrate site. Residues Asp-400, His-404, Asp-441, His-442, and His-460 each coordinate Mn(2+).

The protein belongs to the BPG-independent phosphoglycerate mutase family. As to quaternary structure, monomer. Mn(2+) serves as cofactor.

The catalysed reaction is (2R)-2-phosphoglycerate = (2R)-3-phosphoglycerate. It functions in the pathway carbohydrate degradation; glycolysis; pyruvate from D-glyceraldehyde 3-phosphate: step 3/5. In terms of biological role, catalyzes the interconversion of 2-phosphoglycerate and 3-phosphoglycerate. The polypeptide is 2,3-bisphosphoglycerate-independent phosphoglycerate mutase (Pseudomonas entomophila (strain L48)).